The primary structure comprises 195 residues: Imidazoleglycerol-phosphate dehydratase (195 aa).

The protein belongs to the imidazoleglycerol-phosphate dehydratase family.

The protein localises to the cytoplasm. It carries out the reaction D-erythro-1-(imidazol-4-yl)glycerol 3-phosphate = 3-(imidazol-4-yl)-2-oxopropyl phosphate + H2O. The protein operates within amino-acid biosynthesis; L-histidine biosynthesis; L-histidine from 5-phospho-alpha-D-ribose 1-diphosphate: step 6/9. The protein is Imidazoleglycerol-phosphate dehydratase of Bacillus cytotoxicus (strain DSM 22905 / CIP 110041 / 391-98 / NVH 391-98).